Reading from the N-terminus, the 79-residue chain is Putative transmembrane protein ORF17 (79 aa).

Helical transmembrane passes span 8 to 28 (LMIYFFLPVSYLLVGFVIMYY) and 50 to 70 (VFVMILLIWPFFLFLVVTTTI).

It localises to the host membrane. This is Putative transmembrane protein ORF17 from Haloarcula hispanica (His1V).